The sequence spans 177 residues: Large ribosomal subunit protein eL20 (177 aa).

The protein belongs to the eukaryotic ribosomal protein eL20 family.

The chain is Large ribosomal subunit protein eL20 (RpL18A) from Drosophila melanogaster (Fruit fly).